Here is a 176-residue protein sequence, read N- to C-terminus: Probable superoxide oxidase CybB (176 aa).

The next 4 membrane-spanning stretches (helical) occupy residues 7–27 (CLQI…WSSI), 44–64 (IHFS…LIQL), 85–105 (VGHW…IAIL), and 137–157 (HLLL…AALL). His13 and His45 together coordinate heme b. Residues His137 and His151 each coordinate heme b.

Belongs to the cytochrome b561 family. Heme b is required as a cofactor.

Its subcellular location is the cell inner membrane. It catalyses the reaction a ubiquinol + 2 O2 = 2 superoxide + a ubiquinone + 2 H(+). B-type di-heme cytochrome. Catalyzes the oxidation of superoxide to molecular oxygen and transfers the extracted electrons to ubiquinone through the two hemes. The chain is Probable superoxide oxidase CybB (cybB) from Yersinia pestis.